Consider the following 503-residue polypeptide: Glutamate--tRNA ligase (503 aa).

Residues 15–25 carry the 'HIGH' region motif; that stretch reads PSPTGYLHVGG. The 'KMSKS' region motif lies at 262-266; the sequence is KLSKR. Residue lysine 265 coordinates ATP.

This sequence belongs to the class-I aminoacyl-tRNA synthetase family. Glutamate--tRNA ligase type 1 subfamily. As to quaternary structure, monomer.

The protein localises to the cytoplasm. It catalyses the reaction tRNA(Glu) + L-glutamate + ATP = L-glutamyl-tRNA(Glu) + AMP + diphosphate. In terms of biological role, catalyzes the attachment of glutamate to tRNA(Glu) in a two-step reaction: glutamate is first activated by ATP to form Glu-AMP and then transferred to the acceptor end of tRNA(Glu). The protein is Glutamate--tRNA ligase of Prosthecochloris aestuarii (strain DSM 271 / SK 413).